Reading from the N-terminus, the 294-residue chain is Diaminopimelate epimerase (294 aa).

N13, Q46, and N69 together coordinate substrate. C78 serves as the catalytic Proton donor. Residues 79–80 (GN), N173, N206, and 224–225 (ER) each bind substrate. The active-site Proton acceptor is C233. 234-235 (GT) is a binding site for substrate.

It belongs to the diaminopimelate epimerase family. As to quaternary structure, homodimer.

The protein localises to the cytoplasm. The catalysed reaction is (2S,6S)-2,6-diaminopimelate = meso-2,6-diaminopimelate. Its pathway is amino-acid biosynthesis; L-lysine biosynthesis via DAP pathway; DL-2,6-diaminopimelate from LL-2,6-diaminopimelate: step 1/1. Its function is as follows. Catalyzes the stereoinversion of LL-2,6-diaminopimelate (L,L-DAP) to meso-diaminopimelate (meso-DAP), a precursor of L-lysine and an essential component of the bacterial peptidoglycan. This chain is Diaminopimelate epimerase, found in Variovorax paradoxus (strain S110).